The sequence spans 271 residues: Acetyl-coenzyme A carboxylase carboxyl transferase subunit alpha (271 aa).

The 247-residue stretch at 1–247 folds into the CoA carboxyltransferase C-terminal domain; that stretch reads MSRELIRTAD…KKTILEALGE (247 aa).

It belongs to the AccA family. Acetyl-CoA carboxylase is a heterohexamer composed of biotin carboxyl carrier protein (AccB), biotin carboxylase (AccC) and two subunits each of ACCase subunit alpha (AccA) and ACCase subunit beta (AccD).

Its subcellular location is the cytoplasm. The enzyme catalyses N(6)-carboxybiotinyl-L-lysyl-[protein] + acetyl-CoA = N(6)-biotinyl-L-lysyl-[protein] + malonyl-CoA. The protein operates within lipid metabolism; malonyl-CoA biosynthesis; malonyl-CoA from acetyl-CoA: step 1/1. Its function is as follows. Component of the acetyl coenzyme A carboxylase (ACC) complex. First, biotin carboxylase catalyzes the carboxylation of biotin on its carrier protein (BCCP) and then the CO(2) group is transferred by the carboxyltransferase to acetyl-CoA to form malonyl-CoA. In Clostridium perfringens (strain ATCC 13124 / DSM 756 / JCM 1290 / NCIMB 6125 / NCTC 8237 / Type A), this protein is Acetyl-coenzyme A carboxylase carboxyl transferase subunit alpha.